A 313-amino-acid polypeptide reads, in one-letter code: Type II restriction enzyme BsuMI component YdiR (313 aa).

A disordered region spans residues phenylalanine 289–asparagine 313.

As to quaternary structure, bsuMI restriction activity requires YdiR, YdiS and YdjA.

The catalysed reaction is Endonucleolytic cleavage of DNA to give specific double-stranded fragments with terminal 5'-phosphates.. Functionally, a P subtype restriction enzyme that recognizes the double-stranded sequence 5'-CTCGAG-3'; the cleavage site is unknown. The protein is Type II restriction enzyme BsuMI component YdiR (ydiR) of Bacillus subtilis (strain 168).